The primary structure comprises 324 residues: T-cell acute lymphocytic leukemia protein 1 homolog (324 aa).

Residues 1 to 49 are disordered; it reads MMEKLKSEQFPLSPSAEGCASPPRGDGDARGKQEGTTAETGEHRLPEEL. In terms of domain architecture, bHLH spans 185 to 237; sequence VRRIFTNSRERWRQQNVNGAFAELRKLIPTHPPDKKLSKNEILRLAMKYINFL. Positions 276–324 are disordered; it reads SPNSSCGSLLDGDASPESFTEDQDSSVESRPSARGLHHSSLPLDGNAQR.

In terms of tissue distribution, expressed in hemopoietic and endothelial lineages. Isoform beta emerges first, expressing in the entire anterior and posterior lateral mesoderm (ALM and PLM respectively), and in the ventral wall of the dorsal aorta, where definitive hemopoiesis begins. Isoform alpha expresses later as two pairs of stripes in the PLM and ALM, and becomes restricted to the intermediate cell mass (ICM) by the 18-somite stage. The ICM is the key site of primitive hemopoiesis, giving rise to the erythroid lineage. Also expressed in all stages of endocardial cell migration and in the developing midbrain, hindbrain and spinal cord. In adults, expressed in the main hemopoietic organs, namely the kidney (where isoform alpha is the predominant isoform) and the spleen. Also expressed in the liver, gill and gonads.

Its subcellular location is the nucleus. Transcription factor that plays a pivotal role in hemopoietic and endothelial development, acting synergistically with lmo2 and downstream of clo. Specifies mesodermal precursors to a hemangioblast cell fate. Hemangioblasts are bipotential precursors of blood and endothelium, and in the absence of hemopoietic induction cues such as gata1, tal1/scl-lmo2-induced hemangioblasts differentiate into endothelial cells. Isoform alpha and isoform beta are redundant for the initiation of primitive hemopoiesis but have distinct roles in the regulation of primitive erythroid differentiation and definitive hemopoietic stem cell specification, most likely due to differences in expression levels. Specification of definitive hemopoietic stem cells requires isoform beta. DNA binding is required for erythroid maturation, but not for its other hemopoietic functions. Endothelial roles include development of the dorsal aorta, the site of definitive hemopoiesis in the embryo. Required for angiogenesis but not angioblast specification. Has an additional role in endocardium formation during heart development. May play a role in central nervous system development. This is T-cell acute lymphocytic leukemia protein 1 homolog from Danio rerio (Zebrafish).